The following is a 180-amino-acid chain: uncharacterized protein (180 aa).

Positions 1 to 22 (MKLRFISSALAAALFAATGSYA) are cleaved as a signal peptide. Cys-41 and Cys-81 are disulfide-bonded.

Belongs to the fimbrial protein family.

The protein localises to the fimbrium. This is an uncharacterized protein from Escherichia coli O157:H7.